A 160-amino-acid chain; its full sequence is Cyclic pyranopterin monophosphate synthase (160 aa).

Residues 74 to 76 (LSH) and 112 to 113 (ME) contribute to the substrate site. D127 is a catalytic residue.

Belongs to the MoaC family. Homohexamer; trimer of dimers.

The catalysed reaction is (8S)-3',8-cyclo-7,8-dihydroguanosine 5'-triphosphate = cyclic pyranopterin phosphate + diphosphate. It functions in the pathway cofactor biosynthesis; molybdopterin biosynthesis. Catalyzes the conversion of (8S)-3',8-cyclo-7,8-dihydroguanosine 5'-triphosphate to cyclic pyranopterin monophosphate (cPMP). This Geotalea uraniireducens (strain Rf4) (Geobacter uraniireducens) protein is Cyclic pyranopterin monophosphate synthase.